Here is a 67-residue protein sequence, read N- to C-terminus: MPKMKTKSSAKKRFRVRPGGTVKRGQAFKRHILTKKTTKNKRHLRGAVSVHETNMGSIAQMLPMAGL.

A compositionally biased stretch (basic residues) spans 1–16; that stretch reads MPKMKTKSSAKKRFRV. The segment at 1 to 24 is disordered; that stretch reads MPKMKTKSSAKKRFRVRPGGTVKR.

This sequence belongs to the bacterial ribosomal protein bL35 family.

The protein is Large ribosomal subunit protein bL35 of Delftia acidovorans (strain DSM 14801 / SPH-1).